The chain runs to 164 residues: MTTLKIKTDKVEKPLNKEALIADKQTVKTPKEKMDNSGRFYATGKRKNAIARVWLKPGKGQVIVNKKSLDQYFASETQVKTILQPFTLTKTNNQYDIVCTVRGGGISGQKGAILHGISKALAQSAPDFHAVLRKGGFLTRDSRVVERKKYGQHKARKKTQFSKR.

Belongs to the universal ribosomal protein uS9 family.

The chain is Small ribosomal subunit protein uS9 from Rickettsia bellii (strain OSU 85-389).